The sequence spans 149 residues: Protein FAM72C (149 aa).

It belongs to the FAM72 family.

This Homo sapiens (Human) protein is Protein FAM72C (FAM72C).